A 391-amino-acid polypeptide reads, in one-letter code: Chalcone synthase (391 aa).

Cysteine 164 is a catalytic residue.

This sequence belongs to the thiolase-like superfamily. Chalcone/stilbene synthases family.

The catalysed reaction is (E)-4-coumaroyl-CoA + 3 malonyl-CoA + 3 H(+) = 2',4,4',6'-tetrahydroxychalcone + 3 CO2 + 4 CoA. Its pathway is secondary metabolite biosynthesis; flavonoid biosynthesis. The primary product of this enzyme is 4,2',4',6'-tetrahydroxychalcone (also termed naringenin-chalcone or chalcone) which can under specific conditions spontaneously isomerize into naringenin. The protein is Chalcone synthase (CHS) of Dianthus caryophyllus (Carnation).